The following is a 355-amino-acid chain: Peptide chain release factor 1 (355 aa).

Gln-233 carries the N5-methylglutamine modification.

Belongs to the prokaryotic/mitochondrial release factor family. Post-translationally, methylated by PrmC. Methylation increases the termination efficiency of RF1.

Its subcellular location is the cytoplasm. Peptide chain release factor 1 directs the termination of translation in response to the peptide chain termination codons UAG and UAA. The sequence is that of Peptide chain release factor 1 from Syntrophomonas wolfei subsp. wolfei (strain DSM 2245B / Goettingen).